A 323-amino-acid chain; its full sequence is uncharacterized protein (323 aa).

This is an uncharacterized protein from Bacillus subtilis (strain 168).